Reading from the N-terminus, the 78-residue chain is MKVSSHEMVPEHEIIPGDEIPFLLEKYGIKIQQFPKLLISDPLVIEVGAKVGDIVKITRKSQTAGETVYFRLVVSNSV.

The protein belongs to the archaeal Rpo5/eukaryotic RPB5 RNA polymerase subunit family. Part of the RNA polymerase complex.

The protein resides in the cytoplasm. The catalysed reaction is RNA(n) + a ribonucleoside 5'-triphosphate = RNA(n+1) + diphosphate. DNA-dependent RNA polymerase (RNAP) catalyzes the transcription of DNA into RNA using the four ribonucleoside triphosphates as substrates. The sequence is that of DNA-directed RNA polymerase subunit Rpo5 from Methanococcus vannielii (strain ATCC 35089 / DSM 1224 / JCM 13029 / OCM 148 / SB).